The sequence spans 529 residues: Listeriolysin O (529 aa).

The N-terminal stretch at 1-24 is a signal peptide; the sequence is MKKIMLVFITLILVSLPIAQQTEA. The interval 35–54 is disordered; the sequence is SISSMAPPASPPASPKTPIE. 4 consecutive transmembrane segments (beta stranded) span residues 214–227, 234–243, 312–321, and 329–341; these read ESQL…AFKA, VNFGAISEGK, STKVKAAFDA, and SGDV…IKNS. Residues 483 to 493 carry the Conserved undecapeptide motif; it reads ECTGLAWEWWR. A Cholesterol binding motif is present at residues 515 to 516; sequence TL.

It belongs to the cholesterol-dependent cytolysin family. As to quaternary structure, homooligomeric pore complex of 35 to 50 subunits; when inserted in the host membrane.

It localises to the secreted. It is found in the host membrane. Its subcellular location is the host cell membrane. With respect to regulation, activity of listeriolysin O is regulated on multiple levels. It should be high in the phagosome, thereby allowing escape of the bacteria from the phagosomal compartment. Then, once inside the host cytosol, the activity must be controlled to prevent lysis of the host plasma membrane and loss of the intracellular environment. Its function is as follows. A cholesterol-dependent toxin that causes cytolysis by forming pores in cholesterol containing host membranes. After binding to target membranes, the protein undergoes a major conformation change, leading to its insertion in the host membrane and formation of an oligomeric pore complex. Cholesterol is required for binding to host membranes, membrane insertion and pore formation; cholesterol binding is mediated by a Thr-Leu pair in the C-terminus. Acts as a major virulence factor required for the escape of bacteria from phagosomal vacuoles and entry into the host cytosol. Can be reversibly inactivated by oxidation. This chain is Listeriolysin O (hly), found in Listeria monocytogenes serotype 1/2a (strain 08-5578).